The following is a 473-amino-acid chain: JmjC domain-containing protein 4 (473 aa).

Residues 140 to 433 (PTDGLLTDFS…DFDHPYLDRN (294 aa)) form the JmjC domain. Residues 452 to 473 (TNKKNEKRPAEDDSPSQKKTCQ) form a disordered region.

The protein resides in the nucleus. Has a role in meiosis. In Schizosaccharomyces pombe (strain 972 / ATCC 24843) (Fission yeast), this protein is JmjC domain-containing protein 4 (jmj4).